Consider the following 429-residue polypeptide: Adenylosuccinate synthetase (429 aa).

Residues Gly12–Lys18 and Gly40–Thr42 contribute to the GTP site. Asp13 functions as the Proton acceptor in the catalytic mechanism. Residues Asp13 and Gly40 each contribute to the Mg(2+) site. Residues Asp13–Lys16, Asn38–His41, Thr128, Arg142, Gln223, Thr238, and Arg302 contribute to the IMP site. His41 functions as the Proton donor in the catalytic mechanism. Val298–Arg304 lines the substrate pocket. GTP contacts are provided by residues Arg304, Lys330–Asp332, and Gly412–Gly414.

The protein belongs to the adenylosuccinate synthetase family. Homodimer. Mg(2+) is required as a cofactor.

It is found in the cytoplasm. The catalysed reaction is IMP + L-aspartate + GTP = N(6)-(1,2-dicarboxyethyl)-AMP + GDP + phosphate + 2 H(+). The protein operates within purine metabolism; AMP biosynthesis via de novo pathway; AMP from IMP: step 1/2. Functionally, plays an important role in the de novo pathway of purine nucleotide biosynthesis. Catalyzes the first committed step in the biosynthesis of AMP from IMP. In Corynebacterium efficiens (strain DSM 44549 / YS-314 / AJ 12310 / JCM 11189 / NBRC 100395), this protein is Adenylosuccinate synthetase.